Here is a 540-residue protein sequence, read N- to C-terminus: H(+)/hexose cotransporter 2 (540 aa).

Residues 1 to 29 (MAGGGPVASTTTNRASQYGYARGGLNWYI) are Cytoplasmic-facing. A helical transmembrane segment spans residues 30–50 (FIVALTAGSGGLLFGYDIGVT). The Extracellular segment spans residues 51–90 (GGVTSMPEFLQKFFPSIYDRTQQPSDSKDPYCTYDDQKLQ). Residues 91–111 (LFTSSFFLAGMFVSFFAGSVV) traverse the membrane as a helical segment. Residues 112 to 124 (RRWGRKPTMLIAS) lie on the Cytoplasmic side of the membrane. Residues 125 to 135 (VLFLAGAGLNA) form a helical membrane-spanning segment. At 136 to 147 (GAQDLAMLVIGR) the chain is on the extracellular side. Residues 148-168 (VLLGFGVGGGNNAVPLYLSEC) form a helical membrane-spanning segment. Topologically, residues 169 to 176 (APPKYRGG) are cytoplasmic. The helical transmembrane segment at 177-197 (LNMMFQLAVTIGIIVAQLVNY) threads the bilayer. Over 198–207 (GTQTMNNGWR) the chain is Extracellular. A helical membrane pass occupies residues 208–228 (LSLGLAGVPAIILLIGSLLLP). Residues 229-296 (ETPNSLIERG…YSPMLIVTSL (68 aa)) lie on the Cytoplasmic side of the membrane. A helical transmembrane segment spans residues 297-317 (IAMLQQLTGINAIMFYVPVLF). At 318 to 326 (SSFGTARHA) the chain is on the extracellular side. The chain crosses the membrane as a helical span at residues 327–337 (ALLNTVIIGAV). Residues 338–355 (NVAATFVSIFSVDKFGRR) are Cytoplasmic-facing. Residues 356 to 376 (GLFLEGGIQMFIGQVVTAAVL) form a helical membrane-spanning segment. Residues 377–396 (GVELNKYGTNLPSSTAAGVL) are Extracellular-facing. A helical membrane pass occupies residues 397 to 417 (VVICVYVAAFAWSWGPLGWLV). Over 418 to 435 (PSEIQTLETRGAGMSMAV) the chain is Cytoplasmic. A helical membrane pass occupies residues 436 to 456 (IVNFLFSFVIGQAFLSMMCAM). The Extracellular segment spans residues 457-458 (RW). The chain crosses the membrane as a helical span at residues 459 to 479 (GVFLFFAGWVVIMTFFVYFCL). The Cytoplasmic segment spans residues 480 to 540 (PETKGVPVET…SEDGKPASDQ (61 aa)).

The protein belongs to the major facilitator superfamily. Sugar transporter (TC 2.A.1.1) family.

It is found in the membrane. In terms of biological role, active uptake of galactose. The protein is H(+)/hexose cotransporter 2 (HUP2) of Parachlorella kessleri (Green alga).